Consider the following 544-residue polypeptide: Methionine--tRNA ligase 2 (544 aa).

The 'HIGH' region motif lies at 10 to 20; that stretch reads PYANGSLHLGH. Residues cysteine 141, cysteine 144, cysteine 153, and cysteine 156 each contribute to the Zn(2+) site. The 'KMSKS' region signature appears at 329-333; it reads KLSTS. Threonine 332 lines the ATP pocket.

The protein belongs to the class-I aminoacyl-tRNA synthetase family. MetG type 1 subfamily. Monomer. The cofactor is Zn(2+).

Its subcellular location is the cytoplasm. The enzyme catalyses tRNA(Met) + L-methionine + ATP = L-methionyl-tRNA(Met) + AMP + diphosphate. Is required not only for elongation of protein synthesis but also for the initiation of all mRNA translation through initiator tRNA(fMet) aminoacylation. This Bacillus anthracis protein is Methionine--tRNA ligase 2.